A 406-amino-acid polypeptide reads, in one-letter code: Tyrosine--tRNA ligase (406 aa).

The 'HIGH' region signature appears at 51 to 60; it reads PTAPDLHLGH. The 'KMSKS' region signature appears at 236–240; the sequence is KMSKS. Lysine 239 contributes to the ATP binding site. Residues 345–405 form the S4 RNA-binding domain; that stretch reads IWICKAMVEG…GKRKFLRLIV (61 aa).

It belongs to the class-I aminoacyl-tRNA synthetase family. TyrS type 2 subfamily. Homodimer.

Its subcellular location is the cytoplasm. It carries out the reaction tRNA(Tyr) + L-tyrosine + ATP = L-tyrosyl-tRNA(Tyr) + AMP + diphosphate + H(+). Catalyzes the attachment of tyrosine to tRNA(Tyr) in a two-step reaction: tyrosine is first activated by ATP to form Tyr-AMP and then transferred to the acceptor end of tRNA(Tyr). In Wolinella succinogenes (strain ATCC 29543 / DSM 1740 / CCUG 13145 / JCM 31913 / LMG 7466 / NCTC 11488 / FDC 602W) (Vibrio succinogenes), this protein is Tyrosine--tRNA ligase.